Reading from the N-terminus, the 208-residue chain is High frequency lysogenization protein HflD homolog (208 aa).

The protein belongs to the HflD family.

It localises to the cytoplasm. Its subcellular location is the cell inner membrane. This Edwardsiella ictaluri (strain 93-146) protein is High frequency lysogenization protein HflD homolog.